The sequence spans 112 residues: 2Fe-2S ferredoxin (112 aa).

In terms of domain architecture, 2Fe-2S ferredoxin-type spans 5–107 (IKVTFIINDE…GIKVRLPSAT (103 aa)). [2Fe-2S] cluster contacts are provided by Cys42, Cys48, Cys51, and Cys88.

Belongs to the adrenodoxin/putidaredoxin family. Requires [2Fe-2S] cluster as cofactor.

Its function is as follows. Ferredoxin are iron-sulfur proteins that transfer electrons in a wide variety of metabolic reactions. The sequence is that of 2Fe-2S ferredoxin (fdxB) from Rickettsia prowazekii (strain Madrid E).